The primary structure comprises 184 residues: Photosystem I assembly protein Ycf4 (184 aa).

The next 2 helical transmembrane spans lie at 22–42 (FFWA…GTSS) and 57–77 (IIFF…LFIS).

The protein belongs to the Ycf4 family.

The protein resides in the plastid. It localises to the chloroplast thylakoid membrane. Its function is as follows. Seems to be required for the assembly of the photosystem I complex. The sequence is that of Photosystem I assembly protein Ycf4 from Aethionema grandiflorum (Persian stone-cress).